A 303-amino-acid polypeptide reads, in one-letter code: Digeranylgeranylglyceryl phosphate synthase (303 aa).

The next 7 membrane-spanning stretches (helical) occupy residues 23–43, 88–108, 130–150, 164–184, 206–228, 232–254, and 272–292; these read VLGV…AAIA, LALA…PLTG, LPGN…GSLA, TIPI…VKGV, FALR…AAPL, GYAF…AACL, and VAMF…PVFY.

Belongs to the UbiA prenyltransferase family. DGGGP synthase subfamily. It depends on Mg(2+) as a cofactor.

It is found in the cell membrane. It carries out the reaction sn-3-O-(geranylgeranyl)glycerol 1-phosphate + (2E,6E,10E)-geranylgeranyl diphosphate = 2,3-bis-O-(geranylgeranyl)-sn-glycerol 1-phosphate + diphosphate. Its pathway is membrane lipid metabolism; glycerophospholipid metabolism. Its function is as follows. Prenyltransferase that catalyzes the transfer of the geranylgeranyl moiety of geranylgeranyl diphosphate (GGPP) to the C2 hydroxyl of (S)-3-O-geranylgeranylglyceryl phosphate (GGGP). This reaction is the second ether-bond-formation step in the biosynthesis of archaeal membrane lipids. This Ignicoccus hospitalis (strain KIN4/I / DSM 18386 / JCM 14125) protein is Digeranylgeranylglyceryl phosphate synthase.